Reading from the N-terminus, the 261-residue chain is Ribosomal RNA small subunit methyltransferase A (261 aa).

The S-adenosyl-L-methionine site is built by N20, L22, G47, E68, D90, and N110.

Belongs to the class I-like SAM-binding methyltransferase superfamily. rRNA adenine N(6)-methyltransferase family. RsmA subfamily.

It localises to the cytoplasm. The enzyme catalyses adenosine(1518)/adenosine(1519) in 16S rRNA + 4 S-adenosyl-L-methionine = N(6)-dimethyladenosine(1518)/N(6)-dimethyladenosine(1519) in 16S rRNA + 4 S-adenosyl-L-homocysteine + 4 H(+). Specifically dimethylates two adjacent adenosines (A1518 and A1519) in the loop of a conserved hairpin near the 3'-end of 16S rRNA in the 30S particle. May play a critical role in biogenesis of 30S subunits. This is Ribosomal RNA small subunit methyltransferase A from Prosthecochloris aestuarii (strain DSM 271 / SK 413).